We begin with the raw amino-acid sequence, 159 residues long: MKENVLDVLMYLFQNYMDSEVESQPTKESLEVELTEAGFHHAEIGKAFDWLEGLALLQQSEPRRFPVTNSSIRIFTLHEKEKLDTECRGFLLFLEQVGVLDSMTRELIIDRVMALEAEDFDLEHLKWVILMVLSHQPGQEAAYAWMEDLVFDEVSDLLH.

Belongs to the Smg family.

The chain is Protein Smg homolog from Nitrosococcus oceani (strain ATCC 19707 / BCRC 17464 / JCM 30415 / NCIMB 11848 / C-107).